Consider the following 221-residue polypeptide: MTARVLPSTTAKPLRLWDISPPVAPGSPVFPGDTPYQQQWAASIAPGCPVNVSTLTLSPHIGAHADAPLHYDPQGATIGAVDLTPYIGPCRVIHAIAKGPLIEWEHLAHAVHDLPPRVLVRTYARMPVERWDPTLAAYAPETVERLAALGVKLIGIDTASIDPAGSKTLDSHQVIRQRGLRVLENLVLDEVPEGDYELIALPLKLMTADASPVRAVLRELP.

F30 serves as a coordination point for substrate. The Zn(2+) site is built by H60, H64, and D66. The active-site Proton donor/acceptor is H70. Zn(2+)-binding residues include H172 and E184.

It belongs to the Cyclase 1 superfamily. KynB family. Homodimer. The cofactor is Zn(2+).

It catalyses the reaction N-formyl-L-kynurenine + H2O = L-kynurenine + formate + H(+). It participates in amino-acid degradation; L-tryptophan degradation via kynurenine pathway; L-kynurenine from L-tryptophan: step 2/2. In terms of biological role, catalyzes the hydrolysis of N-formyl-L-kynurenine to L-kynurenine, the second step in the kynurenine pathway of tryptophan degradation. The polypeptide is Kynurenine formamidase (Polaromonas sp. (strain JS666 / ATCC BAA-500)).